The sequence spans 531 residues: MPVKCISVLLLLLQLSCCFSSGSCGKVLVWPMEFSHWMNMKTILDALVQQGHEVTVLRSSASIVIGSNNESGIKFETFHTSYRKDEIENFFMDWFYKMIYNVSIESYWETFSLTKMVILKYSDICEDICKEVILNKKLMTKLQESRFDVVLADPVSPGGELLAELLKIPLVYSLRGFVGYMLQKHGGGLLLPPSYVPVMMSGLGSQMTFMERVQNLLCVLYFDFWFPKFNEKRWDQFYSEVLGRPVTFLELMGKADMWLIRSYWDLEFPRPLLPNFDFIGGLHCKPAKPLPQEMEDFVQSSGEEGVVVFSLGSMISNLTEERANVIASALAQLPQKVLWRFEGKKPDMLGSNTRLYKWIPQNDLLGHPKTKAFITHGGANGVFEAIYHGIPMVGLPLFGDQLDNIVYMKAKGAAVKLNLKTMSSADLLNALKTVINDPSYKENAMTLSRIHHDQPMKPLDRAVFWIEYVMRHKGAKHLRVAAHDLTWYQYHSLDVIGFLLACVAITTYLIVKCCLLVYRYVLGAGKKKKRD.

The first 24 residues, M1–C24, serve as a signal peptide directing secretion. N-linked (GlcNAc...) asparagine glycosylation is found at N69, N101, and N317. The helical transmembrane segment at V495–V511 threads the bilayer.

Belongs to the UDP-glycosyltransferase family.

Its subcellular location is the microsome membrane. It localises to the endoplasmic reticulum membrane. It carries out the reaction glucuronate acceptor + UDP-alpha-D-glucuronate = acceptor beta-D-glucuronoside + UDP + H(+). Its function is as follows. UDPGT is of major importance in the conjugation and subsequent elimination of potentially toxic xenobiotics and endogenous compounds. Acts on small phenolic agents such as 2-beta-naphthol and 4-methylumbelliferone as well as bulky phenolic compounds like 2-hydroxy- and 4-hydroxybiphenyl. In contrast to 2B16 it is active toward octylgallate. This chain is UDP-glucuronosyltransferase 2B13 (UGT2B13), found in Oryctolagus cuniculus (Rabbit).